Reading from the N-terminus, the 177-residue chain is Basic form of pathogenesis-related protein 1 (177 aa).

Residues 1–23 form the signal peptide; that stretch reads MGFLTTIVACFITFAILIHSSKA. A Pyrrolidone carboxylic acid modification is found at Q24. The 117-residue stretch at 31-147 folds into the SCP domain; that stretch reads LNPHNAARRQ…NGWFFITCNY (117 aa).

The protein belongs to the CRISP family. Post-translationally, two disulfide bonds are present.

Its function is as follows. Probably involved in the defense reaction of plants against pathogens. This chain is Basic form of pathogenesis-related protein 1, found in Nicotiana tabacum (Common tobacco).